Reading from the N-terminus, the 166-residue chain is Glycine cleavage system H protein 3, mitochondrial (166 aa).

Residues 1–35 (MALRMWASSTANALKLSSSASKSHLLPAFSISRCF) constitute a mitochondrion transit peptide. In terms of domain architecture, Lipoyl-binding spans 57–139 (VATIGITDHA…YEDGWMIKVK (83 aa)). An N6-lipoyllysine modification is found at Lys98. A Phosphoserine modification is found at Ser141.

Belongs to the GcvH family. The glycine cleavage system is composed of four proteins: P, T, L and H. The cofactor is (R)-lipoate. S-nitrosylated and/or glutathionylated at unknown positions in response to nitric oxide.

Its subcellular location is the mitochondrion. Inhibited by harpin, S-nitrosoglutathione (GSNO), nitric oxide, N-ethylmaleimide and 5,5'-dithiobis-(2-nitrobenzoic acid). Its function is as follows. The glycine decarboxylase (GDC) or glycine cleavage system catalyzes the degradation of glycine. The H protein shuttles the methylamine group of glycine from the P protein to the T protein. The sequence is that of Glycine cleavage system H protein 3, mitochondrial (GDH3) from Arabidopsis thaliana (Mouse-ear cress).